The primary structure comprises 324 residues: Olfactory receptor 8U3 (324 aa).

Residues 1–25 lie on the Extracellular side of the membrane; that stretch reads MAEVNIIYVTVFILKGITNRPELQA. The helical transmembrane segment at 26–46 threads the bilayer; that stretch reads PCFGVFLVIYLVTVLGNLGLI. The Cytoplasmic portion of the chain corresponds to 47–54; that stretch reads TLIKIDTR. A helical membrane pass occupies residues 55–75; the sequence is LHTPMYYFLSHLAFVDLCYSS. The Extracellular segment spans residues 76-99; that stretch reads AITPKMMVNFVVERNTIPFHACAT. Cysteines 97 and 189 form a disulfide. The helical transmembrane segment at 100 to 120 threads the bilayer; that stretch reads QLGCFLTFMITECFLLASMAY. Topologically, residues 121–139 are cytoplasmic; that stretch reads DCYVAICSPLHYSTLMSRR. Residues 140–160 form a helical membrane-spanning segment; it reads VCIQLVAVPYIYSFLVALFHT. Residues 161–196 lie on the Extracellular side of the membrane; it reads VITFRLTYCGPNLINHFYCDDLPFLALSCSDTHMKE. Residues 197 to 217 form a helical membrane-spanning segment; sequence ILIFAFAGFDMISSSSIVLTS. Residues 218-237 lie on the Cytoplasmic side of the membrane; the sequence is YIFIIAAILRIRSTQGQHKA. Residues 238–258 form a helical membrane-spanning segment; it reads ISTCGSHMVTVTIFYGTLIFM. Topologically, residues 259–271 are extracellular; that stretch reads YLQPKSNHSLDTD. Asn265 is a glycosylation site (N-linked (GlcNAc...) asparagine). A helical transmembrane segment spans residues 272 to 292; the sequence is KMASVFYTVVIPMLNPLIYSL. Over 293-324 the chain is Cytoplasmic; that stretch reads RNKEVKDASKKALDKGCENLQILTFLKIRKLY.

It belongs to the G-protein coupled receptor 1 family.

It localises to the cell membrane. Functionally, odorant receptor. The polypeptide is Olfactory receptor 8U3 (Homo sapiens (Human)).